Here is a 2297-residue protein sequence, read N- to C-terminus: Serine/threonine-protein kinase WNK2 (2297 aa).

A compositionally biased stretch (basic and acidic residues) spans Met1–Val10. Disordered regions lie at residues Met1–Val75 and Ala89–Leu183. Omega-N-methylarginine occurs at positions 19 and 30. Ser45 carries the post-translational modification Phosphoserine. The span at Arg92–Gly120 shows a compositional bias: low complexity. Residues Gly142–Glu172 show a composition bias toward basic and acidic residues. Residues Pro173–Asp182 show a composition bias toward acidic residues. The region spanning Leu195–Phe453 is the Protein kinase domain. Residues Ser205, Thr275 to Met278, and Lys325 each bind ATP. Asp342 (proton acceptor) is an active-site residue. Phosphoserine; by autocatalysis is present on residues Ser352 and Ser356. Position 560 is a phosphoserine (Ser560). Disordered regions lie at residues Ala579–Ser630, Phe699–Pro751, Pro917–Gln1022, Pro1117–Ser1185, Ser1262–Asn1297, Ala1323–Gly1345, Ser1374–Pro1480, and Pro1492–Ile1586. Polar residues predominate over residues Pro604 to Tyr625. 2 stretches are compositionally biased toward pro residues: residues Val709–Leu740 and Pro939–Pro1007. The residue at position 1150 (Ser1150) is a Phosphoserine. Residues Ala1167–Arg1178 are compositionally biased toward basic residues. Phosphoserine is present on Ser1262. Positions Ser1392–Ser1406 are enriched in polar residues. The segment covering Ser1411–Pro1426 has biased composition (pro residues). 2 stretches are compositionally biased toward polar residues: residues Ala1439–Gln1453 and Gln1461–Leu1473. Residues Glu1510–Ser1520 show a composition bias toward pro residues. The segment covering Pro1526–Val1544 has biased composition (low complexity). Residues Pro1552–Pro1565 show a composition bias toward pro residues. The residue at position 1588 (Ser1588) is a Phosphoserine. The segment covering Thr1621–Arg1631 has biased composition (basic and acidic residues). The tract at residues Thr1621–Val1865 is disordered. Residues Gln1675–Arg1688 show a composition bias toward polar residues. Ser1685 carries the phosphoserine modification. Residues Ala1721–Gly1731 show a composition bias toward basic and acidic residues. A phosphoserine mark is found at Ser1736, Ser1817, Ser1818, Ser1862, and Ser1889. Disordered regions lie at residues Asn1970 to Lys1990 and Thr2011 to Val2031. Over residues Gly1981–Lys1990 the composition is skewed to basic residues. Ser2067 carries the phosphoserine modification. Disordered regions lie at residues Ser2123 to Leu2142 and Cys2269 to Ser2297. Residues His2272–Phe2289 show a composition bias toward polar residues.

Belongs to the protein kinase superfamily. Ser/Thr protein kinase family. WNK subfamily. As to quaternary structure, forms a complex with the phosphorylated form of STK39. The cofactor is Mg(2+). In terms of processing, autophosphorylated. Autophosphorylation at Ser-352 and Ser-356 promotes its activity. Expressed in various cancer cell lines (at protein level). Predominantly expressed in heart, brain, skeletal muscle and colon.

It is found in the cytoplasm. Its subcellular location is the cell membrane. The enzyme catalyses L-seryl-[protein] + ATP = O-phospho-L-seryl-[protein] + ADP + H(+). It carries out the reaction L-threonyl-[protein] + ATP = O-phospho-L-threonyl-[protein] + ADP + H(+). With respect to regulation, activation requires autophosphorylation of Ser-356 and, to a lower extent, Ser-352. Serine/threonine-protein kinase component of the WNK2-SPAK/OSR1 kinase cascade, which plays an important role in the regulation of electrolyte homeostasis, cell signaling, survival, and proliferation. The WNK2-SPAK/OSR1 kinase cascade is composed of WNK2, which mediates phosphorylation and activation of downstream kinases OXSR1/OSR1 and STK39/SPAK. Following activation, OXSR1/OSR1 and STK39/SPAK catalyze phosphorylation of ion cotransporters, regulating their activity. Acts as an activator and inhibitor of sodium-coupled chloride cotransporters and potassium-coupled chloride cotransporters respectively. Activates SLC12A2, SCNN1A, SCNN1B, SCNN1D and SGK1 and inhibits SLC12A5. Negatively regulates the EGF-induced activation of the ERK/MAPK-pathway and the downstream cell cycle progression. Affects MAPK3/MAPK1 activity by modulating the activity of MAP2K1 and this modulation depends on phosphorylation of MAP2K1 by PAK1. WNK2 acts by interfering with the activity of PAK1 by controlling the balance of the activity of upstream regulators of PAK1 activity, RHOA and RAC1, which display reciprocal activity. In Homo sapiens (Human), this protein is Serine/threonine-protein kinase WNK2.